Here is a 152-residue protein sequence, read N- to C-terminus: Large ribosomal subunit protein uL15 (152 aa).

Positions 1–13 are enriched in polar residues; it reads MLTLGNLSPQEGS. Residues 1-62 form a disordered region; it reads MLTLGNLSPQ…GGQMPLQRRL (62 aa). Over residues 31 to 40 the composition is skewed to basic residues; it reads TAGRGHKGFK.

It belongs to the universal ribosomal protein uL15 family. In terms of assembly, part of the 50S ribosomal subunit.

Functionally, binds to the 23S rRNA. The chain is Large ribosomal subunit protein uL15 from Desulfotalea psychrophila (strain LSv54 / DSM 12343).